The following is a 370-amino-acid chain: tRNA-specific 2-thiouridylase MnmA 1 (370 aa).

ATP contacts are provided by residues 9 to 16 (GMSGGVDS) and Met35. The tract at residues 95–97 (NPD) is interaction with target base in tRNA. Cys100 serves as the catalytic Nucleophile. The cysteines at positions 100 and 196 are disulfide-linked. Residue Gly124 coordinates ATP. Positions 146 to 148 (KDQ) are interaction with tRNA. Cys196 functions as the Cysteine persulfide intermediate in the catalytic mechanism. Positions 306 to 307 (RY) are interaction with tRNA.

This sequence belongs to the MnmA/TRMU family.

It is found in the cytoplasm. The catalysed reaction is S-sulfanyl-L-cysteinyl-[protein] + uridine(34) in tRNA + AH2 + ATP = 2-thiouridine(34) in tRNA + L-cysteinyl-[protein] + A + AMP + diphosphate + H(+). Its function is as follows. Catalyzes the 2-thiolation of uridine at the wobble position (U34) of tRNA, leading to the formation of s(2)U34. The protein is tRNA-specific 2-thiouridylase MnmA 1 of Geobacillus kaustophilus (strain HTA426).